We begin with the raw amino-acid sequence, 49 residues long: uncharacterized protein (49 aa).

This is an uncharacterized protein from Archaeoglobus fulgidus (strain ATCC 49558 / DSM 4304 / JCM 9628 / NBRC 100126 / VC-16).